Reading from the N-terminus, the 448-residue chain is Probable glycine dehydrogenase (decarboxylating) subunit 1 (448 aa).

This sequence belongs to the GcvP family. N-terminal subunit subfamily. The glycine cleavage system is composed of four proteins: P, T, L and H. In this organism, the P 'protein' is a heterodimer of two subunits.

It carries out the reaction N(6)-[(R)-lipoyl]-L-lysyl-[glycine-cleavage complex H protein] + glycine + H(+) = N(6)-[(R)-S(8)-aminomethyldihydrolipoyl]-L-lysyl-[glycine-cleavage complex H protein] + CO2. The glycine cleavage system catalyzes the degradation of glycine. The P protein binds the alpha-amino group of glycine through its pyridoxal phosphate cofactor; CO(2) is released and the remaining methylamine moiety is then transferred to the lipoamide cofactor of the H protein. The chain is Probable glycine dehydrogenase (decarboxylating) subunit 1 from Pyrococcus furiosus (strain ATCC 43587 / DSM 3638 / JCM 8422 / Vc1).